Reading from the N-terminus, the 208-residue chain is V-type ATP synthase subunit D (208 aa).

This sequence belongs to the V-ATPase D subunit family.

Its function is as follows. Produces ATP from ADP in the presence of a proton gradient across the membrane. The sequence is that of V-type ATP synthase subunit D from Streptococcus pyogenes serotype M49 (strain NZ131).